A 348-amino-acid polypeptide reads, in one-letter code: Endoplasmic reticulum junction formation protein lunapark-A (348 aa).

Over 1 to 43 (MSVFCLQAKPTTVEILEGIDKDIQILEDYSVKYQRQMKAVVGR) the chain is Cytoplasmic. Residues 44 to 64 (LLLYSILLYLMAGVVVYSWYL) traverse the membrane as a helical segment. The Lumenal portion of the chain corresponds to 65–67 (PEQ). Residues 68 to 88 (LMGRLVLGLPFLLFPLLVWIL) form a helical membrane-spanning segment. The Cytoplasmic segment spans residues 89-348 (RKVLILFFAR…EEDKQSDSGD (260 aa)). Positions 105–126 (FKLEDLKAQKRKILEDVMETET) form a coiled coil. Positions 142–211 (KKKTDFDSTP…HSAPGGPPER (70 aa)) are disordered. The segment at 277 to 302 (CQQCLSHNGMALKEEFEYVAFRCAYC) adopts a C4-type; plays a role in ER morphology zinc-finger fold. The segment at 313 to 348 (PQAPRLPETAGEPKLPCDLNSSSCAAEEDKQSDSGD) is disordered. The segment covering 339–348 (EEDKQSDSGD) has biased composition (basic and acidic residues).

This sequence belongs to the lunapark family. Homodimer; homodimerization requires the C4-type zinc finger motif and decreases during mitosis in a phosphorylation-dependent manner. Phosphorylated. Phosphorylation occurs during interphase. Phosphorylation also occurs during mitosis; these phosphorylations reduce both its homodimerization and the ER three-way tubular junction formation.

It is found in the endoplasmic reticulum membrane. In terms of biological role, endoplasmic reticulum (ER)-shaping membrane protein that plays a role in determining ER morphology. Involved in the stabilization of nascent three-way ER tubular junctions within the ER network. May also play a role as a curvature-stabilizing protein within three-way ER tubular junction network. The protein is Endoplasmic reticulum junction formation protein lunapark-A (lnpka) of Takifugu rubripes (Japanese pufferfish).